The sequence spans 662 residues: Glutathione hydrolase 7 (662 aa).

Over 1 to 106 (MAAENEASQE…ASECSCRQDG (106 aa)) the chain is Cytoplasmic. A phosphoserine mark is found at serine 17, serine 72, serine 79, and serine 83. Residues 26–90 (SFPRLPEDEP…DGSPLRETRK (65 aa)) form a disordered region. The span at 72 to 83 (SSSSEMGSQDGS) shows a compositional bias: low complexity. A helical; Signal-anchor for type II membrane protein membrane pass occupies residues 107 to 127 (LTVIVTACLTFATGVTVALIM). Over 128-662 (QIYFGDPQIF…SPDAAGATIL (535 aa)) the chain is Extracellular. Residues asparagine 198, asparagine 267, asparagine 283, asparagine 330, asparagine 353, asparagine 394, asparagine 452, asparagine 519, and asparagine 586 are each glycosylated (N-linked (GlcNAc...) asparagine).

Belongs to the gamma-glutamyltransferase family. Heterodimer composed of the light and heavy chains. The active site is located in the light chain. In terms of processing, cleaved by autocatalysis into a large and a small subunit and the autocatalytic cleavage is essential to the functional activation of the enzyme.

It localises to the membrane. It catalyses the reaction an N-terminal (5-L-glutamyl)-[peptide] + an alpha-amino acid = 5-L-glutamyl amino acid + an N-terminal L-alpha-aminoacyl-[peptide]. The enzyme catalyses glutathione + H2O = L-cysteinylglycine + L-glutamate. The catalysed reaction is an S-substituted glutathione + H2O = an S-substituted L-cysteinylglycine + L-glutamate. Its pathway is sulfur metabolism; glutathione metabolism. In terms of biological role, hydrolyzes and transfers gamma-glutamyl moieties from glutathione and other gamma-glutamyl compounds to acceptors. The polypeptide is Glutathione hydrolase 7 (Bos taurus (Bovine)).